Reading from the N-terminus, the 2273-residue chain is Acetyl-CoA carboxylase, mitochondrial (2273 aa).

The transit peptide at 1-104 (KGKTITHGQS…RGNIHKHTRL (104 aa)) directs the protein to the mitochondrion. Residues 134-635 (VISKILIANN…STGWLDDLIL (502 aa)) enclose the Biotin carboxylation domain. Positions 292 to 484 (KTNFVSVPDD…LPATQLQIAM (193 aa)) constitute an ATP-grasp domain. 332-337 (GGGGKG) is a binding site for ATP. Residue R459 is part of the active site. Residues 763 to 837 (LEAELNPTQV…EAGDVIAKLT (75 aa)) enclose the Biotinyl-binding domain. An N6-biotinyllysine modification is found at K804. Positions 1532–1867 (PYSVKDWLQP…KRDMSPPLLE (336 aa)) constitute a CoA carboxyltransferase N-terminal domain. The segment at 1532 to 2187 (PYSVKDWLQP…EGQVIKRLQK (656 aa)) is carboxyltransferase. Residues R1776, K2080, and R2082 each coordinate CoA. Positions 1871–2187 (RWDRDVDFKP…EGQVIKRLQK (317 aa)) constitute a CoA carboxyltransferase C-terminal domain.

Requires biotin as cofactor.

Its subcellular location is the mitochondrion. It carries out the reaction hydrogencarbonate + acetyl-CoA + ATP = malonyl-CoA + ADP + phosphate + H(+). The enzyme catalyses N(6)-biotinyl-L-lysyl-[protein] + hydrogencarbonate + ATP = N(6)-carboxybiotinyl-L-lysyl-[protein] + ADP + phosphate + H(+). The protein operates within lipid metabolism; malonyl-CoA biosynthesis; malonyl-CoA from acetyl-CoA: step 1/1. Its function is as follows. Catalyzes the rate-limiting reaction in the mitochondrial fatty acid synthesis (FAS) type II pathway. Responsible for the production of the mitochondrial malonyl-CoA, used for the biosynthesis of the cofactor lipoic acid. This protein carries three functions: biotin carboxyl carrier protein, biotin carboxylase, and carboxyltransferase. The polypeptide is Acetyl-CoA carboxylase, mitochondrial (HFA1) (Saccharomyces cerevisiae (strain JAY291) (Baker's yeast)).